The chain runs to 181 residues: Acireductone dioxygenase (181 aa).

Acidic residues predominate over residues 1 to 10; it reads MRAYIYDEES. The disordered stretch occupies residues 1-23; sequence MRAYIYDEESQLSPQDEHESSQS. Fe(2+) contacts are provided by histidine 82, histidine 84, glutamate 88, and histidine 128. The Ni(2+) site is built by histidine 82, histidine 84, glutamate 88, and histidine 128.

Belongs to the acireductone dioxygenase (ARD) family. Requires Fe(2+) as cofactor. Ni(2+) is required as a cofactor.

It localises to the cytoplasm. The protein localises to the nucleus. The enzyme catalyses 1,2-dihydroxy-5-(methylsulfanyl)pent-1-en-3-one + O2 = 4-methylsulfanyl-2-oxobutanoate + formate + 2 H(+). It catalyses the reaction 1,2-dihydroxy-5-(methylsulfanyl)pent-1-en-3-one + O2 = 3-(methylsulfanyl)propanoate + CO + formate + 2 H(+). It participates in amino-acid biosynthesis; L-methionine biosynthesis via salvage pathway; L-methionine from S-methyl-5-thio-alpha-D-ribose 1-phosphate: step 5/6. In terms of biological role, catalyzes 2 different reactions between oxygen and the acireductone 1,2-dihydroxy-3-keto-5-methylthiopentene (DHK-MTPene) depending upon the metal bound in the active site. Fe-containing acireductone dioxygenase (Fe-ARD) produces formate and 2-keto-4-methylthiobutyrate (KMTB), the alpha-ketoacid precursor of methionine in the methionine recycle pathway. Ni-containing acireductone dioxygenase (Ni-ARD) produces methylthiopropionate, carbon monoxide and formate, and does not lie on the methionine recycle pathway. This Puccinia graminis f. sp. tritici (strain CRL 75-36-700-3 / race SCCL) (Black stem rust fungus) protein is Acireductone dioxygenase.